The primary structure comprises 573 residues: Probable D-xylulose kinase A (573 aa).

Substrate contacts are provided by His-97, Arg-168, Asp-284, and Asn-285. ATP-binding positions include Trp-366, 471-472 (GG), and Asn-475.

Belongs to the FGGY kinase family.

It is found in the cytoplasm. It catalyses the reaction D-xylulose + ATP = D-xylulose 5-phosphate + ADP + H(+). Its function is as follows. Highly specific D-xylulose kinase which participates in the catabolism of xylose. Xylose is a major component of hemicelluloses such as xylan. Most fungi utilize D-xylose via three enzymatic reactions, xylose reductase (XR), xylitol dehydrogenase (XDH), and xylulokinase, to form xylulose 5-phosphate, which enters pentose phosphate pathway. This is Probable D-xylulose kinase A (xkiA) from Aspergillus fumigatus (strain ATCC MYA-4609 / CBS 101355 / FGSC A1100 / Af293) (Neosartorya fumigata).